We begin with the raw amino-acid sequence, 122 residues long: Large ribosomal subunit protein uL14 (122 aa).

It belongs to the universal ribosomal protein uL14 family. Part of the 50S ribosomal subunit. Forms a cluster with proteins L3 and L19. In the 70S ribosome, L14 and L19 interact and together make contacts with the 16S rRNA in bridges B5 and B8.

Its function is as follows. Binds to 23S rRNA. Forms part of two intersubunit bridges in the 70S ribosome. The sequence is that of Large ribosomal subunit protein uL14 from Leptothrix cholodnii (strain ATCC 51168 / LMG 8142 / SP-6) (Leptothrix discophora (strain SP-6)).